We begin with the raw amino-acid sequence, 295 residues long: Probable alpha-L-glutamate ligase (295 aa).

The ATP-grasp domain occupies His104 to Glu287. ATP contacts are provided by residues Lys141, Glu178–Phe179, Asp187, and Arg211–Asn213. Positions 248, 260, and 262 each coordinate Mg(2+). Asp248, Glu260, and Asn262 together coordinate Mn(2+).

It belongs to the RimK family. The cofactor is Mg(2+). Requires Mn(2+) as cofactor.

The chain is Probable alpha-L-glutamate ligase from Xanthomonas oryzae pv. oryzae (strain MAFF 311018).